Consider the following 149-residue polypeptide: MQVILLDKVAQLGTVGDQVTVKAGFARNYLIPQGKAVMATAANIAHFEARRAELEAKAAEALSAAQARAAAIANLAAIVITSKAGDDGRLFGSVGVRDIAEAVSAAGVAVTKSEVRLPEGALRTIGEHEVKLHLHAEVNAVVTINVVSE.

It belongs to the bacterial ribosomal protein bL9 family.

In terms of biological role, binds to the 23S rRNA. This is Large ribosomal subunit protein bL9 from Glaesserella parasuis serovar 5 (strain SH0165) (Haemophilus parasuis).